The primary structure comprises 123 residues: Large ribosomal subunit protein uL14 (123 aa).

Belongs to the universal ribosomal protein uL14 family. In terms of assembly, part of the 50S ribosomal subunit. Forms a cluster with proteins L3 and L19. In the 70S ribosome, L14 and L19 interact and together make contacts with the 16S rRNA in bridges B5 and B8.

In terms of biological role, binds to 23S rRNA. Forms part of two intersubunit bridges in the 70S ribosome. The polypeptide is Large ribosomal subunit protein uL14 (Vibrio cholerae serotype O1 (strain ATCC 39541 / Classical Ogawa 395 / O395)).